Consider the following 244-residue polypeptide: UPF0173 metal-dependent hydrolase RoseRS_3945 (244 aa).

The protein belongs to the UPF0173 family.

The polypeptide is UPF0173 metal-dependent hydrolase RoseRS_3945 (Roseiflexus sp. (strain RS-1)).